Here is a 626-residue protein sequence, read N- to C-terminus: MIPANASARKGPEGKYPLHYLVWHNRHRELEKEVRAGQVDIEQLDPRGRTPLHLATTLGHLECARVLLAHGADVGRENRSGWTVLQEAVSTRDLELVQLVLRYRDYQRVVKRLAGIPVLLEKLRKAQDFYVEMKWEFTSWVPLVSKICPSDTYKVWKSGQNLRVDTTLLGFDHMTWQRGNRSFVFRGQDTSAVVMEIDHDRRVVYTETLALAGQDRELLLAAAQPTEEQVLSRLTAPVVTTQLDTKNISFERNKTGILGWRSEKTEMVNGYEAKVYGASNVELITRTRTEHLSEQHKGKVKGCKTPLQSFLGIAEQHGGPQNGTLITQTLSQANPTAITAEEYFNPNFELGNRDMGRPMELTTKTQKFKAKLWLCEEHPLSLCEQVAPIIDLMAVSNALFAKLRDFITLRLPPGFPVKIEIPIFHILNARITFGNLNGCDEPVPSVRGSPSSETPSPGSDSSSVSSSSSTTSCRGCEISPALFEAPRGYSMMGGQREAATRDDDDDLLQFAIQQSLLEAGSEYDQVTIWEALTNSKPGTHPMSYEGRRQDRSAPPTPQRQPAPPASVPSPRPSSGPGSGGHVFRSYDEQLRLAMELSAQEQEERRRRARQEEEELERILRLSLTEQ.

At methionine 1 the chain carries N-acetylmethionine. ANK repeat units lie at residues 47–76 and 80–109; these read RGRT…DVGR and SGWT…YQRV. The segment at 442-474 is disordered; sequence PVPSVRGSPSSETPSPGSDSSSVSSSSSTTSCR. Low complexity predominate over residues 449–472; the sequence is SPSSETPSPGSDSSSVSSSSSTTS. The UIM 1 domain occupies 503 to 522; the sequence is DDDDLLQFAIQQSLLEAGSE. 2 disordered regions span residues 534–590 and 595–614; these read NSKP…DEQL and ELSA…EEEE. Residues 554–573 show a composition bias toward pro residues; sequence PPTPQRQPAPPASVPSPRPS. UIM domains are found at residues 585-604 and 610-626; these read SYDE…QEER and QEEE…LTEQ.

In terms of assembly, interacts with EGFR (ubiquitinated); the interaction is direct and may regulate EGFR internalization.

Its subcellular location is the cell membrane. The protein localises to the late endosome. The protein resides in the early endosome. Ubiquitin-binding protein that specifically recognizes and binds 'Lys-63'-linked ubiquitin. Does not bind 'Lys-48'-linked ubiquitin. Positively regulates the internalization of ligand-activated EGFR by binding to the Ub moiety of ubiquitinated EGFR at the cell membrane. This Homo sapiens (Human) protein is Ankyrin repeat domain-containing protein 13B (ANKRD13B).